The sequence spans 262 residues: Abhydrolase domain-containing protein AKT2 (262 aa).

The Peroxisomal targeting signal type 1 signature appears at 260–262; it reads SKL.

Belongs to the AB hydrolase superfamily. AKT2 hydrolase family.

It localises to the peroxisome. The protein operates within mycotoxin biosynthesis. Its function is as follows. Abhydrolase domain-containing protein; part of the gene clusters that mediate the biosynthesis of the host-selective toxins (HSTs) AK-toxins responsible for Japanese pear black spot disease by the Japanese pear pathotype. AK-toxins are esters of 9,10-epoxy 8-hydroxy 9-methyldecatrienoic acid (EDA). On cellular level, AK-toxins affect plasma membrane of susceptible cells and cause a sudden increase in loss of K(+) after a few minutes of toxin treatment. The acyl-CoA ligase AKT1, the hydrolase AKT2 and enoyl-CoA hydratase AKT3 are all involved in the biosynthesis of the AK-, AF- and ACT-toxin common 9,10-epoxy-8-hydroxy-9-methyl-decatrienoic acid (EDA) structural moiety. Part of the EDA biosynthesis occurs in the peroxisome since these 3 enzymes are localized in peroxisomes. The exact roles of the 3 enzymes, as well as of additional AK-toxin clusters enzymes, including AKT4, AKT6 and AKTS1, have still to be elucidated. The Cytochrome P450 monooxygenase AKT7 on the other side functions to limit production of EDA and AK-toxin, probably via the catalysis of a side reaction of EDA or its precursor. The polypeptide is Abhydrolase domain-containing protein AKT2 (Alternaria alternata (Alternaria rot fungus)).